A 113-amino-acid polypeptide reads, in one-letter code: Nitrogenase-stabilizing/protective protein NifW (113 aa).

It belongs to the NifW family. Homotrimer; associates with NifD.

In terms of biological role, may protect the nitrogenase Fe-Mo protein from oxidative damage. The protein is Nitrogenase-stabilizing/protective protein NifW of Dechloromonas aromatica (strain RCB).